The primary structure comprises 414 residues: Putative dipeptidase TRV_05564 (414 aa).

The signal sequence occupies residues Met-1–Ala-20. His-45, Asp-47, and Glu-157 together coordinate Zn(2+). Cys-96 and Cys-186 form a disulfide bridge. Substrate is bound at residue His-184. Residues His-228 and His-249 each contribute to the Zn(2+) site. Residues Arg-260 and Asp-320 each coordinate substrate. Asn-392 carries an N-linked (GlcNAc...) asparagine glycan.

It belongs to the metallo-dependent hydrolases superfamily. Peptidase M19 family. Zn(2+) serves as cofactor.

It catalyses the reaction an L-aminoacyl-L-amino acid + H2O = 2 an L-alpha-amino acid. Hydrolyzes a wide range of dipeptides. The sequence is that of Putative dipeptidase TRV_05564 from Trichophyton verrucosum (strain HKI 0517).